Consider the following 162-residue polypeptide: Caveolin-2 (162 aa).

At 1–86 the chain is on the cytoplasmic side; the sequence is MGLETEKADV…FEISKYIIYK (86 aa). Tyr19 bears the Phosphotyrosine; by SRC mark. Ser20 and Ser23 each carry phosphoserine. Tyr27 bears the Phosphotyrosine; by SRC mark. Positions 87 to 107 form an intramembrane region, helical; sequence FLTVFLAIPLAFAAGILFATL. Over 108-162 the chain is Cytoplasmic; sequence SCLHIWITMPFVKTCLMVLPSVQTIWKSVTDVAIAPLCTSVGRSFSSVSLQLSHD.

It belongs to the caveolin family. As to quaternary structure, monomer or homodimer. Interacts with CAV1; the interaction forms a stable heterooligomeric complex that is required for targeting to lipid rafts and for caveolae formation. Tyrosine phosphorylated forms do not form heterooligomers with the Tyr-19-phosphorylated form existing as a monomer or dimer, and the Tyr-27-form as a monomer only. Interacts (tyrosine phosphorylated form) with the SH2 domain-containing proteins, RASA1, NCK1 and SRC. Interacts (tyrosine phosphorylated form) with INSR, the interaction (Tyr-27-phosphorylated form) is increased on insulin stimulation. Interacts (Tyr-19 phosphorylated form) with MAPK1 (phosphorylated form); the interaction, promoted by insulin, leads to nuclear location and MAPK1 activation. Interacts with STAT3; the interaction is increased on insulin-induced tyrosine phosphorylation leading to STAT activation. Post-translationally, phosphorylated on serine and tyrosine residues. CAV1 promotes phosphorylation on Ser-23 which then targets the complex to the plasma membrane, lipid rafts and caveolae. Phosphorylation on both Tyr-19 and Tyr-27 is required for insulin-induced 'Ser-727' phosphorylation of STAT3 and its activation. Phosphorylation on Tyr-19 is required for insulin-induced phosphorylation of MAPK1 and DNA binding of STAT3. Tyrosine phosphorylation is induced by both EGF and insulin.

It is found in the nucleus. Its subcellular location is the cytoplasm. The protein resides in the golgi apparatus membrane. It localises to the cell membrane. The protein localises to the membrane. It is found in the caveola. Its function is as follows. May act as a scaffolding protein within caveolar membranes. Interacts directly with G-protein alpha subunits and can functionally regulate their activity. Acts as an accessory protein in conjunction with CAV1 in targeting to lipid rafts and driving caveolae formation. Positive regulator of cellular mitogenesis of the MAPK signaling pathway. Required for the insulin-stimulated nuclear translocation and activation of MAPK1 and STAT3, and the subsequent regulation of cell cycle progression. The polypeptide is Caveolin-2 (CAV2) (Dasypus novemcinctus (Nine-banded armadillo)).